An 84-amino-acid chain; its full sequence is Small ribosomal subunit protein uS17 (84 aa).

It belongs to the universal ribosomal protein uS17 family. Part of the 30S ribosomal subunit.

One of the primary rRNA binding proteins, it binds specifically to the 5'-end of 16S ribosomal RNA. The sequence is that of Small ribosomal subunit protein uS17 from Blochmanniella pennsylvanica (strain BPEN).